A 238-amino-acid chain; its full sequence is Urease accessory protein UreF (238 aa).

Belongs to the UreF family. In terms of assembly, ureD, UreF and UreG form a complex that acts as a GTP-hydrolysis-dependent molecular chaperone, activating the urease apoprotein by helping to assemble the nickel containing metallocenter of UreC. The UreE protein probably delivers the nickel.

The protein localises to the cytoplasm. Its function is as follows. Required for maturation of urease via the functional incorporation of the urease nickel metallocenter. The polypeptide is Urease accessory protein UreF (Delftia acidovorans (strain DSM 14801 / SPH-1)).